A 233-amino-acid chain; its full sequence is Small ribosomal subunit protein uS2 (233 aa).

The protein belongs to the universal ribosomal protein uS2 family.

The polypeptide is Small ribosomal subunit protein uS2 (Bacillus mycoides (strain KBAB4) (Bacillus weihenstephanensis)).